The chain runs to 72 residues: ATP synthase subunit c (72 aa).

2 helical membrane passes run 1-21 (MSLG…GAGI) and 48-68 (MFIG…FSFI).

The protein belongs to the ATPase C chain family. F-type ATPases have 2 components, F(1) - the catalytic core - and F(0) - the membrane proton channel. F(1) has five subunits: alpha(3), beta(3), gamma(1), delta(1), epsilon(1). F(0) has three main subunits: a(1), b(2) and c(10-14). The alpha and beta chains form an alternating ring which encloses part of the gamma chain. F(1) is attached to F(0) by a central stalk formed by the gamma and epsilon chains, while a peripheral stalk is formed by the delta and b chains.

It is found in the cell membrane. F(1)F(0) ATP synthase produces ATP from ADP in the presence of a proton or sodium gradient. F-type ATPases consist of two structural domains, F(1) containing the extramembraneous catalytic core and F(0) containing the membrane proton channel, linked together by a central stalk and a peripheral stalk. During catalysis, ATP synthesis in the catalytic domain of F(1) is coupled via a rotary mechanism of the central stalk subunits to proton translocation. In terms of biological role, key component of the F(0) channel; it plays a direct role in translocation across the membrane. A homomeric c-ring of between 10-14 subunits forms the central stalk rotor element with the F(1) delta and epsilon subunits. This is ATP synthase subunit c from Geobacillus stearothermophilus (Bacillus stearothermophilus).